Reading from the N-terminus, the 728-residue chain is UvrABC system protein C (728 aa).

The GIY-YIG domain maps to 16 to 95 (DSPGVYRFRD…IKEYDPRFNV (80 aa)). Residues 208–243 (GTYLRRLERQMAEAAEEMEYERAARLRDDIGALKKA) form the UVR domain. Disordered stretches follow at residues 473–535 (ADGE…GRPK) and 689–728 (VNTA…GQER). The segment covering 487–505 (GDAAPNGDAAPNDGAAPDD) has biased composition (low complexity).

Belongs to the UvrC family. In terms of assembly, interacts with UvrB in an incision complex.

The protein resides in the cytoplasm. Functionally, the UvrABC repair system catalyzes the recognition and processing of DNA lesions. UvrC both incises the 5' and 3' sides of the lesion. The N-terminal half is responsible for the 3' incision and the C-terminal half is responsible for the 5' incision. The protein is UvrABC system protein C of Streptomyces coelicolor (strain ATCC BAA-471 / A3(2) / M145).